The following is a 247-amino-acid chain: Putative methyltransferase YqeM (247 aa).

Belongs to the methyltransferase superfamily.

Functionally, may be a S-adenosyl-L-methionine (SAM)-dependent methyltransferase. This Bacillus subtilis (strain 168) protein is Putative methyltransferase YqeM (yqeM).